The chain runs to 416 residues: Ribulose bisphosphate carboxylase large chain (416 aa).

An N6,N6,N6-trimethyllysine modification is found at lysine 5. Substrate contacts are provided by asparagine 114 and threonine 164. Lysine 166 functions as the Proton acceptor in the catalytic mechanism. Lysine 168 contributes to the substrate binding site. Residues lysine 192, aspartate 194, and glutamate 195 each contribute to the Mg(2+) site. N6-carboxylysine is present on lysine 192. Histidine 285 serves as the catalytic Proton acceptor. 3 residues coordinate substrate: arginine 286, histidine 318, and serine 370.

It belongs to the RuBisCO large chain family. Type I subfamily. In terms of assembly, heterohexadecamer of 8 large chains and 8 small chains; disulfide-linked. The disulfide link is formed within the large subunit homodimers. Mg(2+) is required as a cofactor. In terms of processing, the disulfide bond which can form in the large chain dimeric partners within the hexadecamer appears to be associated with oxidative stress and protein turnover.

It is found in the plastid. Its subcellular location is the chloroplast. It catalyses the reaction 2 (2R)-3-phosphoglycerate + 2 H(+) = D-ribulose 1,5-bisphosphate + CO2 + H2O. It carries out the reaction D-ribulose 1,5-bisphosphate + O2 = 2-phosphoglycolate + (2R)-3-phosphoglycerate + 2 H(+). In terms of biological role, ruBisCO catalyzes two reactions: the carboxylation of D-ribulose 1,5-bisphosphate, the primary event in carbon dioxide fixation, as well as the oxidative fragmentation of the pentose substrate in the photorespiration process. Both reactions occur simultaneously and in competition at the same active site. The sequence is that of Ribulose bisphosphate carboxylase large chain (rbcL) from Spigelia marilandica (Woodland pinkroot).